A 366-amino-acid chain; its full sequence is D-alanine--D-alanine ligase (366 aa).

The region spanning 145–348 is the ATP-grasp domain; that stretch reads KRLLDDAGLA…YQSLITKLIE (204 aa). An ATP-binding site is contributed by 175-230; sequence VEQLGLPLFIKPANLGSSVGISKVNNEAEFNAALSMAFEYDLKVIIESAIVGREIE. The Mg(2+) site is built by D302, E315, and N317.

Belongs to the D-alanine--D-alanine ligase family. Mg(2+) is required as a cofactor. Requires Mn(2+) as cofactor.

It localises to the cytoplasm. It carries out the reaction 2 D-alanine + ATP = D-alanyl-D-alanine + ADP + phosphate + H(+). It participates in cell wall biogenesis; peptidoglycan biosynthesis. Its function is as follows. Cell wall formation. The polypeptide is D-alanine--D-alanine ligase (Proteus mirabilis (strain HI4320)).